Consider the following 222-residue polypeptide: Probable transaldolase (222 aa).

K91 acts as the Schiff-base intermediate with substrate in catalysis.

It belongs to the transaldolase family. Type 3B subfamily.

It localises to the cytoplasm. It catalyses the reaction D-sedoheptulose 7-phosphate + D-glyceraldehyde 3-phosphate = D-erythrose 4-phosphate + beta-D-fructose 6-phosphate. It functions in the pathway carbohydrate degradation; pentose phosphate pathway; D-glyceraldehyde 3-phosphate and beta-D-fructose 6-phosphate from D-ribose 5-phosphate and D-xylulose 5-phosphate (non-oxidative stage): step 2/3. Functionally, transaldolase is important for the balance of metabolites in the pentose-phosphate pathway. This chain is Probable transaldolase, found in Pelodictyon phaeoclathratiforme (strain DSM 5477 / BU-1).